The sequence spans 131 residues: Small ribosomal subunit protein uS8 (131 aa).

It belongs to the universal ribosomal protein uS8 family. Part of the 30S ribosomal subunit. Contacts proteins S5 and S12.

One of the primary rRNA binding proteins, it binds directly to 16S rRNA central domain where it helps coordinate assembly of the platform of the 30S subunit. The chain is Small ribosomal subunit protein uS8 from Campylobacter jejuni (strain RM1221).